The primary structure comprises 349 residues: Phenylalanine--tRNA ligase alpha subunit (349 aa).

Glutamate 259 serves as a coordination point for Mg(2+).

Belongs to the class-II aminoacyl-tRNA synthetase family. Phe-tRNA synthetase alpha subunit type 1 subfamily. In terms of assembly, tetramer of two alpha and two beta subunits. Mg(2+) serves as cofactor.

The protein localises to the cytoplasm. It catalyses the reaction tRNA(Phe) + L-phenylalanine + ATP = L-phenylalanyl-tRNA(Phe) + AMP + diphosphate + H(+). This chain is Phenylalanine--tRNA ligase alpha subunit, found in Lactobacillus johnsonii (strain CNCM I-12250 / La1 / NCC 533).